A 337-amino-acid chain; its full sequence is GTP 3',8-cyclase (337 aa).

One can recognise a Radical SAM core domain in the interval T17–A242. R26 serves as a coordination point for GTP. Residues C33 and C37 each coordinate [4Fe-4S] cluster. Y39 serves as a coordination point for S-adenosyl-L-methionine. C40 lines the [4Fe-4S] cluster pocket. R76 provides a ligand contact to GTP. G80 provides a ligand contact to S-adenosyl-L-methionine. Residue T107 participates in GTP binding. S131 is an S-adenosyl-L-methionine binding site. K168 lines the GTP pocket. M202 serves as a coordination point for S-adenosyl-L-methionine. [4Fe-4S] cluster-binding residues include C265 and C268. R270 to R272 contacts GTP. C282 serves as a coordination point for [4Fe-4S] cluster.

This sequence belongs to the radical SAM superfamily. MoaA family. In terms of assembly, monomer and homodimer. It depends on [4Fe-4S] cluster as a cofactor.

It catalyses the reaction GTP + AH2 + S-adenosyl-L-methionine = (8S)-3',8-cyclo-7,8-dihydroguanosine 5'-triphosphate + 5'-deoxyadenosine + L-methionine + A + H(+). The protein operates within cofactor biosynthesis; molybdopterin biosynthesis. Functionally, catalyzes the cyclization of GTP to (8S)-3',8-cyclo-7,8-dihydroguanosine 5'-triphosphate. This Mannheimia succiniciproducens (strain KCTC 0769BP / MBEL55E) protein is GTP 3',8-cyclase.